The primary structure comprises 252 residues: Tumor necrosis factor ligand superfamily member 15 (252 aa).

At 1–39 (MAEELGLGFGEAVPVEMLPEGCRHRREARTGLAARSKAC) the chain is on the cytoplasmic side. The chain crosses the membrane as a helical; Signal-anchor for type II membrane protein span at residues 40–60 (LALTCCLLSFPILAGLSTLLM). Residues 61-252 (TGQLRIPGKD…DKTFFGAFLI (192 aa)) lie on the Extracellular side of the membrane. One can recognise a THD domain in the interval 96-252 (PKAHLTIMRQ…DKTFFGAFLI (157 aa)). Asparagine 134 is a glycosylation site (N-linked (GlcNAc...) asparagine). A disulfide bridge links cysteine 163 with cysteine 203. An N-linked (GlcNAc...) asparagine glycan is attached at asparagine 230.

The protein belongs to the tumor necrosis factor family. As to quaternary structure, homotrimer.

Its subcellular location is the membrane. In terms of biological role, receptor for TNFRSF25 and TNFRSF6B. Mediates activation of NF-kappa-B. Inhibits vascular endothelial growth and angiogenesis (in vitro). Promotes activation of caspases and apoptosis. Promotes splenocyte alloactivation. This is Tumor necrosis factor ligand superfamily member 15 (Tnfsf15) from Rattus norvegicus (Rat).